Here is a 283-residue protein sequence, read N- to C-terminus: Digeranylgeranylglyceryl phosphate synthase (283 aa).

The next 8 membrane-spanning stretches (helical) occupy residues 5 to 27 (VEII…AILA), 37 to 57 (AMLA…YFDY), 85 to 105 (LLFI…DTWI), 128 to 148 (PLIG…FAGY), 152 to 172 (EGLI…MTTA), 203 to 223 (AIIA…LYIY), 228 to 248 (INYL…AVLL), and 263 to 283 (LKTG…TITF).

It belongs to the UbiA prenyltransferase family. DGGGP synthase subfamily. The cofactor is Mg(2+).

It is found in the cell membrane. The enzyme catalyses sn-3-O-(geranylgeranyl)glycerol 1-phosphate + (2E,6E,10E)-geranylgeranyl diphosphate = 2,3-bis-O-(geranylgeranyl)-sn-glycerol 1-phosphate + diphosphate. It participates in membrane lipid metabolism; glycerophospholipid metabolism. Its function is as follows. Prenyltransferase that catalyzes the transfer of the geranylgeranyl moiety of geranylgeranyl diphosphate (GGPP) to the C2 hydroxyl of (S)-3-O-geranylgeranylglyceryl phosphate (GGGP). This reaction is the second ether-bond-formation step in the biosynthesis of archaeal membrane lipids. The polypeptide is Digeranylgeranylglyceryl phosphate synthase (Methanobrevibacter smithii (strain ATCC 35061 / DSM 861 / OCM 144 / PS)).